Reading from the N-terminus, the 426-residue chain is Glutamyl-tRNA reductase (426 aa).

Substrate contacts are provided by residues 49-52 (TCNR), Ser110, 115-117 (EAQ), and Gln121. Cys50 acts as the Nucleophile in catalysis. 191–196 (GAGEMA) provides a ligand contact to NADP(+).

It belongs to the glutamyl-tRNA reductase family. Homodimer.

The catalysed reaction is (S)-4-amino-5-oxopentanoate + tRNA(Glu) + NADP(+) = L-glutamyl-tRNA(Glu) + NADPH + H(+). The protein operates within porphyrin-containing compound metabolism; protoporphyrin-IX biosynthesis; 5-aminolevulinate from L-glutamyl-tRNA(Glu): step 1/2. Its function is as follows. Catalyzes the NADPH-dependent reduction of glutamyl-tRNA(Glu) to glutamate 1-semialdehyde (GSA). The chain is Glutamyl-tRNA reductase from Rhodopirellula baltica (strain DSM 10527 / NCIMB 13988 / SH1).